The primary structure comprises 488 residues: Ribulose bisphosphate carboxylase large chain (488 aa).

Residues N127 and T177 each contribute to the substrate site. Residue K179 is the Proton acceptor of the active site. K181 contacts substrate. The Mg(2+) site is built by K205, D207, and E208. Residue K205 is modified to N6-carboxylysine. H297 (proton acceptor) is an active-site residue. The substrate site is built by R298, H330, and S382.

This sequence belongs to the RuBisCO large chain family. Type I subfamily. Heterohexadecamer of 8 large chains and 8 small chains. Mg(2+) is required as a cofactor.

Its subcellular location is the plastid. It is found in the chloroplast. It carries out the reaction 2 (2R)-3-phosphoglycerate + 2 H(+) = D-ribulose 1,5-bisphosphate + CO2 + H2O. It catalyses the reaction D-ribulose 1,5-bisphosphate + O2 = 2-phosphoglycolate + (2R)-3-phosphoglycerate + 2 H(+). Functionally, ruBisCO catalyzes two reactions: the carboxylation of D-ribulose 1,5-bisphosphate, the primary event in carbon dioxide fixation, as well as the oxidative fragmentation of the pentose substrate in the photorespiration process. Both reactions occur simultaneously and in competition at the same active site. The polypeptide is Ribulose bisphosphate carboxylase large chain (rbcL) (Pyropia haitanensis (Red seaweed)).